A 156-amino-acid chain; its full sequence is Small ribosomal subunit protein uS7 (156 aa).

It belongs to the universal ribosomal protein uS7 family. In terms of assembly, part of the 30S ribosomal subunit. Contacts proteins S9 and S11.

Functionally, one of the primary rRNA binding proteins, it binds directly to 16S rRNA where it nucleates assembly of the head domain of the 30S subunit. Is located at the subunit interface close to the decoding center, probably blocks exit of the E-site tRNA. The sequence is that of Small ribosomal subunit protein uS7 from Rhodospirillum centenum (strain ATCC 51521 / SW).